Here is a 333-residue protein sequence, read N- to C-terminus: Holliday junction branch migration complex subunit RuvB (333 aa).

The tract at residues Met-1 to Tyr-182 is large ATPase domain (RuvB-L). ATP is bound by residues Leu-21, Arg-22, Gly-63, Lys-66, Thr-67, Thr-68, Glu-129–Phe-131, Arg-172, Tyr-182, and Arg-219. Thr-67 contacts Mg(2+). The small ATPAse domain (RuvB-S) stretch occupies residues Thr-183 to Gln-253. Residues Lys-256 to Val-333 are head domain (RuvB-H). The DNA site is built by Arg-311 and Arg-316.

It belongs to the RuvB family. In terms of assembly, homohexamer. Forms an RuvA(8)-RuvB(12)-Holliday junction (HJ) complex. HJ DNA is sandwiched between 2 RuvA tetramers; dsDNA enters through RuvA and exits via RuvB. An RuvB hexamer assembles on each DNA strand where it exits the tetramer. Each RuvB hexamer is contacted by two RuvA subunits (via domain III) on 2 adjacent RuvB subunits; this complex drives branch migration. In the full resolvosome a probable DNA-RuvA(4)-RuvB(12)-RuvC(2) complex forms which resolves the HJ.

The protein resides in the cytoplasm. The catalysed reaction is ATP + H2O = ADP + phosphate + H(+). Functionally, the RuvA-RuvB-RuvC complex processes Holliday junction (HJ) DNA during genetic recombination and DNA repair, while the RuvA-RuvB complex plays an important role in the rescue of blocked DNA replication forks via replication fork reversal (RFR). RuvA specifically binds to HJ cruciform DNA, conferring on it an open structure. The RuvB hexamer acts as an ATP-dependent pump, pulling dsDNA into and through the RuvAB complex. RuvB forms 2 homohexamers on either side of HJ DNA bound by 1 or 2 RuvA tetramers; 4 subunits per hexamer contact DNA at a time. Coordinated motions by a converter formed by DNA-disengaged RuvB subunits stimulates ATP hydrolysis and nucleotide exchange. Immobilization of the converter enables RuvB to convert the ATP-contained energy into a lever motion, pulling 2 nucleotides of DNA out of the RuvA tetramer per ATP hydrolyzed, thus driving DNA branch migration. The RuvB motors rotate together with the DNA substrate, which together with the progressing nucleotide cycle form the mechanistic basis for DNA recombination by continuous HJ branch migration. Branch migration allows RuvC to scan DNA until it finds its consensus sequence, where it cleaves and resolves cruciform DNA. In Bacillus cereus (strain 03BB102), this protein is Holliday junction branch migration complex subunit RuvB.